The sequence spans 391 residues: Coiled-coil domain-containing protein 85C-A (391 aa).

2 coiled-coil regions span residues 23–87 (KCSK…ELCC) and 121–146 (FQQK…KEII). The interval 154 to 212 (NGAGSRSSIDSQSSLSNLNGGSATVRDVGDGSSTSSTGSAGSPDHHHSHIHKPTEGKIT) is disordered. Composition is skewed to low complexity over residues 158-175 (SRSS…NGGS) and 183-195 (DGSS…SAGS).

It belongs to the CCDC85 family.

It localises to the cell junction. It is found in the tight junction. Its subcellular location is the adherens junction. Functionally, may play a role in cell-cell adhesion and epithelium development through its interaction with proteins of the beta-catenin family. May play an important role in cortical development, especially in the maintenance of radial glia. The polypeptide is Coiled-coil domain-containing protein 85C-A (ccdc85ca) (Danio rerio (Zebrafish)).